The chain runs to 92 residues: C-C motif chemokine 3 (92 aa).

Positions 1 to 23 (MQVSTAALAVLLCTMALCNQFSA) are cleaved as a signal peptide. Intrachain disulfides connect Cys33–Cys57 and Cys34–Cys73.

Belongs to the intercrine beta (chemokine CC) family. Self-associates. Also heterodimer of MIP-1-alpha(4-69) and MIP-1-beta(3-69). Interacts with CCR1. Post-translationally, N-terminal processed form LD78-alpha(4-69) is produced by proteolytic cleavage after secretion from HTLV1-transformed T-cells.

The protein resides in the secreted. Its function is as follows. Monokine with inflammatory and chemokinetic properties. Binds to CCR1, CCR4 and CCR5. One of the major HIV-suppressive factors produced by CD8+ T-cells. Recombinant MIP-1-alpha induces a dose-dependent inhibition of different strains of HIV-1, HIV-2, and simian immunodeficiency virus (SIV). This chain is C-C motif chemokine 3 (CCL3), found in Homo sapiens (Human).